The primary structure comprises 508 residues: GMP synthase [glutamine-hydrolyzing] (508 aa).

The Glutamine amidotransferase type-1 domain occupies 1–189; the sequence is MILVLDFGSQ…ALLVCGCEKT (189 aa). The Nucleophile role is filled by Cys-78. Active-site residues include His-163 and Glu-165. One can recognise a GMPS ATP-PPase domain in the interval 190–383; that stretch reads WGMQHFAQRE…LGVSQDFLMH (194 aa). 217-223 contacts ATP; that stretch reads SGGVDST.

In terms of assembly, homodimer.

It carries out the reaction XMP + L-glutamine + ATP + H2O = GMP + L-glutamate + AMP + diphosphate + 2 H(+). It functions in the pathway purine metabolism; GMP biosynthesis; GMP from XMP (L-Gln route): step 1/1. Catalyzes the synthesis of GMP from XMP. In Helicobacter pylori (strain G27), this protein is GMP synthase [glutamine-hydrolyzing].